The chain runs to 443 residues: Ribulose bisphosphate carboxylase large chain (443 aa).

Residue Lys3 is modified to N6,N6,N6-trimethyllysine. Asn112 and Thr162 together coordinate substrate. Lys164 functions as the Proton acceptor in the catalytic mechanism. Lys166 serves as a coordination point for substrate. Mg(2+) contacts are provided by Lys190, Asp192, and Glu193. Lys190 carries the N6-carboxylysine modification. His283 functions as the Proton acceptor in the catalytic mechanism. Residues Arg284, His316, and Ser368 each contribute to the substrate site.

This sequence belongs to the RuBisCO large chain family. Type I subfamily. Heterohexadecamer of 8 large chains and 8 small chains; disulfide-linked. The disulfide link is formed within the large subunit homodimers. The cofactor is Mg(2+). Post-translationally, the disulfide bond which can form in the large chain dimeric partners within the hexadecamer appears to be associated with oxidative stress and protein turnover.

Its subcellular location is the plastid. It localises to the chloroplast. It carries out the reaction 2 (2R)-3-phosphoglycerate + 2 H(+) = D-ribulose 1,5-bisphosphate + CO2 + H2O. The catalysed reaction is D-ribulose 1,5-bisphosphate + O2 = 2-phosphoglycolate + (2R)-3-phosphoglycerate + 2 H(+). Functionally, ruBisCO catalyzes two reactions: the carboxylation of D-ribulose 1,5-bisphosphate, the primary event in carbon dioxide fixation, as well as the oxidative fragmentation of the pentose substrate in the photorespiration process. Both reactions occur simultaneously and in competition at the same active site. The polypeptide is Ribulose bisphosphate carboxylase large chain (Iris germanica (Bearded iris)).